A 213-amino-acid chain; its full sequence is Cytidylate kinase (213 aa).

Position 9 to 17 (9 to 17) interacts with ATP; it reads GPAASGKGT.

It belongs to the cytidylate kinase family. Type 1 subfamily.

Its subcellular location is the cytoplasm. It carries out the reaction CMP + ATP = CDP + ADP. The catalysed reaction is dCMP + ATP = dCDP + ADP. The sequence is that of Cytidylate kinase from Caulobacter vibrioides (strain ATCC 19089 / CIP 103742 / CB 15) (Caulobacter crescentus).